A 661-amino-acid chain; its full sequence is Lateral signaling target protein 2 (661 aa).

Positions 294 to 432 (VPEDTSSTLT…SDDEITDDVQ (139 aa)) are disordered. A compositionally biased stretch (polar residues) spans 297–310 (DTSSTLTMSDFRTN). 2 stretches are compositionally biased toward low complexity: residues 330–360 (SDST…SPHS) and 381–393 (TNSN…TESP). The segment covering 394-411 (ETIEEPDNVDMEESSESE) has biased composition (acidic residues). Positions 412–422 (VDTHIDETRNE) are enriched in basic and acidic residues. The FYVE-type zinc-finger motif lies at 566–626 (DEDCEQCTAC…VCNLCYVHRL (61 aa)). Residues C572, C575, C588, C591, C596, C599, C618, and C621 each contribute to the Zn(2+) site. Residues 641 to 650 (NGATVPSVTE) show a composition bias toward polar residues. The interval 641–661 (NGATVPSVTEQQSAQTASASS) is disordered. The segment covering 651 to 661 (QQSAQTASASS) has biased composition (low complexity).

This sequence belongs to the lst-2 family. In terms of tissue distribution, expressed in vulval precursor cells (VPCs).

Its function is as follows. Negative regulator of epidermal growth factor receptor (EGFR) signaling. In Caenorhabditis elegans, this protein is Lateral signaling target protein 2 (lst-2).